We begin with the raw amino-acid sequence, 248 residues long: Proteasome subunit alpha type-5 (248 aa).

It belongs to the peptidase T1A family. As to quaternary structure, the 26S proteasome consists of a 20S proteasome core and two 19S regulatory subunits. The 20S proteasome core is composed of 28 subunits that are arranged in four stacked rings, resulting in a barrel-shaped structure. The two end rings are each formed by seven alpha subunits, and the two central rings are each formed by seven beta subunits. The catalytic chamber with the active sites is on the inside of the barrel.

The protein resides in the cytoplasm. Its subcellular location is the nucleus. In terms of biological role, the proteasome is a multicatalytic proteinase complex which is characterized by its ability to cleave peptides with Arg, Phe, Tyr, Leu, and Glu adjacent to the leaving group at neutral or slightly basic pH. The proteasome has an ATP-dependent proteolytic activity. The polypeptide is Proteasome subunit alpha type-5 (pas-5) (Caenorhabditis elegans).